Reading from the N-terminus, the 333-residue chain is Cytochrome f (333 aa).

The first 44 residues, 1 to 44 (MRNASVTARLTRSVRAIVKTLLIAIATVTFYFSCDLALPQSAAA), serve as a signal peptide directing secretion. Positions 45, 66, 69, and 70 each coordinate heme. The helical transmembrane segment at 301 to 318 (GLIAFVALVMLAQVMLVL) threads the bilayer.

This sequence belongs to the cytochrome f family. The 4 large subunits of the cytochrome b6-f complex are cytochrome b6, subunit IV (17 kDa polypeptide, PetD), cytochrome f and the Rieske protein, while the 4 small subunits are PetG, PetL, PetM and PetN. The complex functions as a dimer. Heme is required as a cofactor.

The protein resides in the cellular thylakoid membrane. In terms of biological role, component of the cytochrome b6-f complex, which mediates electron transfer between photosystem II (PSII) and photosystem I (PSI), cyclic electron flow around PSI, and state transitions. This Desmonostoc sp. (strain PCC 7906) (Nostoc sp. (strain PCC 7906)) protein is Cytochrome f (petA).